The primary structure comprises 813 residues: Leucine--tRNA ligase (813 aa).

A 'HIGH' region motif is present at residues proline 41–histidine 51. Residues lysine 575–serine 579 carry the 'KMSKS' region motif. Lysine 578 contacts ATP.

It belongs to the class-I aminoacyl-tRNA synthetase family.

Its subcellular location is the cytoplasm. It catalyses the reaction tRNA(Leu) + L-leucine + ATP = L-leucyl-tRNA(Leu) + AMP + diphosphate. In Francisella philomiragia subsp. philomiragia (strain ATCC 25017 / CCUG 19701 / FSC 153 / O#319-036), this protein is Leucine--tRNA ligase.